Consider the following 268-residue polypeptide: NADPH-dependent 7-cyano-7-deazaguanine reductase (268 aa).

79–81 (VES) provides a ligand contact to substrate. Residue 81-82 (SK) participates in NADPH binding. The active-site Thioimide intermediate is the Cys-176. Asp-183 functions as the Proton donor in the catalytic mechanism. 215-216 (HE) provides a ligand contact to substrate. 244-245 (RG) is a binding site for NADPH.

It belongs to the GTP cyclohydrolase I family. QueF type 2 subfamily. Homodimer.

It is found in the cytoplasm. The enzyme catalyses 7-aminomethyl-7-carbaguanine + 2 NADP(+) = 7-cyano-7-deazaguanine + 2 NADPH + 3 H(+). Its pathway is tRNA modification; tRNA-queuosine biosynthesis. Catalyzes the NADPH-dependent reduction of 7-cyano-7-deazaguanine (preQ0) to 7-aminomethyl-7-deazaguanine (preQ1). This is NADPH-dependent 7-cyano-7-deazaguanine reductase from Saccharophagus degradans (strain 2-40 / ATCC 43961 / DSM 17024).